The chain runs to 405 residues: Dematin (405 aa).

Disordered regions lie at residues Met-1–Ile-30, Pro-79–Gln-158, Phe-173–Trp-192, and Thr-203–Asn-332. Residues Ser-11–Ser-29 are compositionally biased toward low complexity. Residues Ser-16, Ser-18, Ser-26, Ser-92, Ser-96, Ser-105, Ser-110, Ser-113, and Ser-156 each carry the phosphoserine modification. The span at Ile-108–Thr-123 shows a compositional bias: polar residues. Residues Glu-216 to Gly-227 are compositionally biased toward acidic residues. Positions Asp-224–Pro-308 are interaction with RASGRF2. The residue at position 226 (Ser-226) is a Phosphoserine. 2 stretches are compositionally biased toward basic and acidic residues: residues Glu-228 to Ser-242 and Ile-252 to Leu-261. Residues Ser-269, Ser-279, Ser-289, Ser-303, Ser-315, Ser-333, Ser-372, and Ser-383 each carry the phosphoserine modification. Polar residues predominate over residues Phe-276–Glu-322. An HP domain is found at Val-337–Phe-405. A Phosphoserine; by PKA modification is found at Ser-403.

Belongs to the villin/gelsolin family. In terms of assembly, monomeric (isoform 2); under reducing conditions. Self-associates. Exists under oxidizing condition as a trimer of two isoforms 2 and isoform 1 linked by disulfide bonds. Found in a complex with DMTN, F-actin and spectrin. Found in a complex with ADD2, DMTN and SLC2A1. Interacts with F-actin, ITPKB, RASGRF2 and spectrin. Isoform 2 interacts with SLC2A1 (via C-terminus cytoplasmic region). Isoform 1 and isoform 2 interact (phosphorylated form) with plasmodium berghei 14-3-3 protein; the interaction occurs in a PKA-dependent manner. Post-translationally, phosphorylated. Phosphorylation at Ser-403 by PKA causes the C-terminal headpiece domain to associate with the N-terminal core domain, and leads to the inhibition of its actin bundling activity. The N-terminus is blocked. Expressed in platelets (at protein level). Expressed in heart, brain, lung, skeletal muscle, and kidney.

Its subcellular location is the cytoplasm. It is found in the cytosol. The protein localises to the perinuclear region. The protein resides in the cytoskeleton. It localises to the cell membrane. Its subcellular location is the membrane. It is found in the endomembrane system. The protein localises to the cell projection. Functionally, membrane-cytoskeleton-associated protein with F-actin-binding activity that induces F-actin bundles formation and stabilization. Its F-actin-bundling activity is reversibly regulated upon its phosphorylation by the cAMP-dependent protein kinase A (PKA). Binds to the erythrocyte membrane glucose transporter-1 SLC2A1/GLUT1, and hence stabilizes and attaches the spectrin-actin network to the erythrocytic plasma membrane. Plays a role in maintaining the functional integrity of PKA-activated erythrocyte shape and the membrane mechanical properties. Also plays a role as a modulator of actin dynamics in fibroblasts; acts as a negative regulator of the RhoA activation pathway. In platelets, functions as a regulator of internal calcium mobilization across the dense tubular system that affects platelet granule secretion pathways and aggregation. Also required for the formation of a diverse set of cell protrusions, such as filopodia and lamellipodia, necessary for platelet cell spreading, motility and migration. Acts as a tumor suppressor and inhibits malignant cell transformation. The polypeptide is Dematin (DMTN) (Homo sapiens (Human)).